Reading from the N-terminus, the 142-residue chain is MPTFNQLVRKGRKAAKKKSTAPALQKGFNSLKKVQTDISCPQKRGVCTVVKTTTPKKPNSALRKIARVRLTNGIEVTAYIPGIGHNLQEHSVVLIRGGRVKDLPGVRYHIIRGTLDAAGVAKRMQGRSKYGAKRPKSSAAAK.

The segment at 1-22 is disordered; sequence MPTFNQLVRKGRKAAKKKSTAP. The segment covering 9 to 19 has biased composition (basic residues); that stretch reads RKGRKAAKKKS. Asp-102 carries the post-translational modification 3-methylthioaspartic acid.

The protein belongs to the universal ribosomal protein uS12 family. As to quaternary structure, part of the 30S ribosomal subunit. Contacts proteins S8 and S17. May interact with IF1 in the 30S initiation complex.

With S4 and S5 plays an important role in translational accuracy. Functionally, interacts with and stabilizes bases of the 16S rRNA that are involved in tRNA selection in the A site and with the mRNA backbone. Located at the interface of the 30S and 50S subunits, it traverses the body of the 30S subunit contacting proteins on the other side and probably holding the rRNA structure together. The combined cluster of proteins S8, S12 and S17 appears to hold together the shoulder and platform of the 30S subunit. The protein is Small ribosomal subunit protein uS12 of Acetivibrio thermocellus (strain ATCC 27405 / DSM 1237 / JCM 9322 / NBRC 103400 / NCIMB 10682 / NRRL B-4536 / VPI 7372) (Clostridium thermocellum).